The primary structure comprises 425 residues: Glutamate-1-semialdehyde 2,1-aminomutase (425 aa).

Lys-265 carries the N6-(pyridoxal phosphate)lysine modification.

This sequence belongs to the class-III pyridoxal-phosphate-dependent aminotransferase family. HemL subfamily. In terms of assembly, homodimer. Requires pyridoxal 5'-phosphate as cofactor.

Its subcellular location is the cytoplasm. It catalyses the reaction (S)-4-amino-5-oxopentanoate = 5-aminolevulinate. The protein operates within porphyrin-containing compound metabolism; protoporphyrin-IX biosynthesis; 5-aminolevulinate from L-glutamyl-tRNA(Glu): step 2/2. This Clostridium perfringens (strain SM101 / Type A) protein is Glutamate-1-semialdehyde 2,1-aminomutase.